A 600-amino-acid chain; its full sequence is Novobiocin biosynthesis protein H (600 aa).

Positions 505 to 526 are disordered; the sequence is GGKTDRAGLPDPVKATQPAGLG. Residues 526–600 enclose the Carrier domain; that stretch reads GPRTPAEKVL…QLAAIATLEE (75 aa). Position 561 is an O-(pantetheine 4'-phosphoryl)serine (Ser-561).

The protein belongs to the ATP-dependent AMP-binding enzyme family.

Its pathway is antibiotic biosynthesis; novobiocin biosynthesis. Together with NovI, involved in the formation of a beta-OH-Tyr intermediate in the novobiocin biosynthesis pathway, an aminocoumarin family antibiotic that targets bacterial DNA gyrases. The ATP-dependent AMP-binding region activates L-Tyr as L-tyrosyl-AMP and then transfers the L-tyrosyl group to the acyl carrier domain through thioester formation to form a tyrosyl-S intermediate that is covalently tethered to NovH (L-Tyr-S-NovH). This Streptomyces niveus (Streptomyces spheroides) protein is Novobiocin biosynthesis protein H (novH).